Here is a 200-residue protein sequence, read N- to C-terminus: uncharacterized protein (200 aa).

Disordered regions lie at residues 1–27 (MTDTRREQEKDERRKLQEQSRQNEAET), 42–79 (IPKEAKGNEPLLENYKSGLQETRKELETTPDATKSTNA), and 169–200 (HGRAGIVRNPQAAQHQRQRQMEKTGAGREHGR). Residues 187-200 (RQMEKTGAGREHGR) are compositionally biased toward basic and acidic residues.

This is an uncharacterized protein from Shigella flexneri.